A 206-amino-acid polypeptide reads, in one-letter code: Large ribosomal subunit protein uL22m (206 aa).

The N-terminal 40 residues, 1–40 (MAAAVLGQLGALWIHNLRSRGKLALGVLPQSYIHTSASLD), are a transit peptide targeting the mitochondrion.

This sequence belongs to the universal ribosomal protein uL22 family. In terms of assembly, component of the mitochondrial large ribosomal subunit (mt-LSU). Mature mammalian 55S mitochondrial ribosomes consist of a small (28S) and a large (39S) subunit. The 28S small subunit contains a 12S ribosomal RNA (12S mt-rRNA) and 30 different proteins. The 39S large subunit contains a 16S rRNA (16S mt-rRNA), a copy of mitochondrial valine transfer RNA (mt-tRNA(Val)), which plays an integral structural role, and 52 different proteins.

Its subcellular location is the mitochondrion. This Homo sapiens (Human) protein is Large ribosomal subunit protein uL22m (MRPL22).